We begin with the raw amino-acid sequence, 88 residues long: Small ribosomal subunit protein uS15 (88 aa).

Belongs to the universal ribosomal protein uS15 family. As to quaternary structure, part of the 30S ribosomal subunit. Forms a bridge to the 50S subunit in the 70S ribosome, contacting the 23S rRNA.

Functionally, one of the primary rRNA binding proteins, it binds directly to 16S rRNA where it helps nucleate assembly of the platform of the 30S subunit by binding and bridging several RNA helices of the 16S rRNA. Forms an intersubunit bridge (bridge B4) with the 23S rRNA of the 50S subunit in the ribosome. This Borrelia garinii subsp. bavariensis (strain ATCC BAA-2496 / DSM 23469 / PBi) (Borreliella bavariensis) protein is Small ribosomal subunit protein uS15.